Here is a 346-residue protein sequence, read N- to C-terminus: DNA primase small subunit PriS (346 aa).

Active-site residues include aspartate 97, aspartate 99, and aspartate 278.

This sequence belongs to the eukaryotic-type primase small subunit family. Heterodimer of a small subunit (PriS) and a large subunit (PriL). Requires Mg(2+) as cofactor. Mn(2+) serves as cofactor.

Functionally, catalytic subunit of DNA primase, an RNA polymerase that catalyzes the synthesis of short RNA molecules used as primers for DNA polymerase during DNA replication. The small subunit contains the primase catalytic core and has DNA synthesis activity on its own. Binding to the large subunit stabilizes and modulates the activity, increasing the rate of DNA synthesis while decreasing the length of the DNA fragments, and conferring RNA synthesis capability. The DNA polymerase activity may enable DNA primase to also catalyze primer extension after primer synthesis. May also play a role in DNA repair. The protein is DNA primase small subunit PriS of Thermococcus onnurineus (strain NA1).